The primary structure comprises 540 residues: Chaperonin GroEL 1 (540 aa).

Residues 29-32 (TIGP), 86-90 (DGTTT), Gly415, 479-481 (NAA), and Asp495 contribute to the ATP site.

It belongs to the chaperonin (HSP60) family. In terms of assembly, forms a cylinder of 14 subunits composed of two heptameric rings stacked back-to-back. Interacts with the co-chaperonin GroES.

Its subcellular location is the cytoplasm. The catalysed reaction is ATP + H2O + a folded polypeptide = ADP + phosphate + an unfolded polypeptide.. Together with its co-chaperonin GroES, plays an essential role in assisting protein folding. The GroEL-GroES system forms a nano-cage that allows encapsulation of the non-native substrate proteins and provides a physical environment optimized to promote and accelerate protein folding. This chain is Chaperonin GroEL 1, found in Streptomyces albus G.